Consider the following 193-residue polypeptide: Xanthine phosphoribosyltransferase (193 aa).

2 residues coordinate xanthine: Leu-20 and Thr-27. 128-132 contacts 5-phospho-alpha-D-ribose 1-diphosphate; sequence ANGQA. Lys-156 provides a ligand contact to xanthine.

The protein belongs to the purine/pyrimidine phosphoribosyltransferase family. Xpt subfamily. As to quaternary structure, homodimer.

It is found in the cytoplasm. The catalysed reaction is XMP + diphosphate = xanthine + 5-phospho-alpha-D-ribose 1-diphosphate. Its pathway is purine metabolism; XMP biosynthesis via salvage pathway; XMP from xanthine: step 1/1. In terms of biological role, converts the preformed base xanthine, a product of nucleic acid breakdown, to xanthosine 5'-monophosphate (XMP), so it can be reused for RNA or DNA synthesis. This chain is Xanthine phosphoribosyltransferase, found in Streptococcus pyogenes serotype M3 (strain ATCC BAA-595 / MGAS315).